The sequence spans 117 residues: Large ribosomal subunit protein bL20 (117 aa).

This sequence belongs to the bacterial ribosomal protein bL20 family.

Its function is as follows. Binds directly to 23S ribosomal RNA and is necessary for the in vitro assembly process of the 50S ribosomal subunit. It is not involved in the protein synthesizing functions of that subunit. The polypeptide is Large ribosomal subunit protein bL20 (Rickettsia rickettsii (strain Iowa)).